The sequence spans 252 residues: Putative peptide zinc metalloprotease protein YydH (252 aa).

Helical transmembrane passes span 56–76 (FFYL…IHLI) and 85–105 (VFYG…NIVL). His106 provides a ligand contact to Zn(2+). Glu107 is a catalytic residue. His110 is a Zn(2+) binding site. 3 helical membrane-spanning segments follow: residues 152–172 (IIVH…LELI), 181–201 (ALTM…IPIL), and 231–251 (IQII…LYIV).

It belongs to the peptidase M50B family. The cofactor is Zn(2+).

The protein resides in the cell membrane. Its function is as follows. Required for production of the modified peptide YydF. May process the precursor form of YydF to release the active peptide (Potential). The polypeptide is Putative peptide zinc metalloprotease protein YydH (yydH) (Bacillus subtilis (strain 168)).